Here is a 175-residue protein sequence, read N- to C-terminus: ATP synthase subunit delta (175 aa).

It belongs to the ATPase delta chain family. In terms of assembly, F-type ATPases have 2 components, F(1) - the catalytic core - and F(0) - the membrane proton channel. F(1) has five subunits: alpha(3), beta(3), gamma(1), delta(1), epsilon(1). F(0) has three main subunits: a(1), b(2) and c(10-14). The alpha and beta chains form an alternating ring which encloses part of the gamma chain. F(1) is attached to F(0) by a central stalk formed by the gamma and epsilon chains, while a peripheral stalk is formed by the delta and b chains.

The protein localises to the cell membrane. F(1)F(0) ATP synthase produces ATP from ADP in the presence of a proton or sodium gradient. F-type ATPases consist of two structural domains, F(1) containing the extramembraneous catalytic core and F(0) containing the membrane proton channel, linked together by a central stalk and a peripheral stalk. During catalysis, ATP synthesis in the catalytic domain of F(1) is coupled via a rotary mechanism of the central stalk subunits to proton translocation. Its function is as follows. This protein is part of the stalk that links CF(0) to CF(1). It either transmits conformational changes from CF(0) to CF(1) or is implicated in proton conduction. The protein is ATP synthase subunit delta of Stenotrophomonas maltophilia (strain K279a).